The primary structure comprises 467 residues: MNEPNSWVEWVDPELDVDEAAVPQPVVAVVGRPNVGKSTLVNRLIGRRQAVVEDVPGVTRDRVPYDAQWNGRQFAVVDTGGWEPDAKDRAAAIAAQAESAITTADVVLFVVDAVVGATDVDEAAVKMLRRSAKPVILVANKADNSSIEMEASALWSLGLGEPYPVSALHGRGSGELLDLILDRLPEAPKIVEDRPRGPRRVALVGRPNVGKSSLLNRFSGEIRAVVDAVAGTTVDPVDSLVEIGGEAWQLVDTAGLRKRVGQASGTEYYASLRTTSAIEAAEVAVVLLDASEVISEQDQRILSMVTDAGRALVIAFNKWDLVDADRRYYLDREIERELRRIPWAIRLNLSARTGRAVDKLAPALRRALASWETRVPTAQLNAWLTALVQATPHPVRGGRAPKILFATQAGAAPPRFVLFTTGPLDAGYQRFVERKLREEFGFEGSPIEISVRARKKLGPGGRGKAHG.

EngA-type G domains are found at residues 25–188 (PVVA…PEAP) and 199–372 (RRVA…ASWE). GTP contacts are provided by residues 31–38 (GRPNVGKS), 78–82 (DTGGW), 140–143 (NKAD), 205–212 (GRPNVGKS), 252–256 (DTAGL), and 317–320 (NKWD). A KH-like domain is found at 373 to 455 (TRVPTAQLNA…PIEISVRARK (83 aa)).

It belongs to the TRAFAC class TrmE-Era-EngA-EngB-Septin-like GTPase superfamily. EngA (Der) GTPase family. In terms of assembly, associates with the 50S ribosomal subunit.

Functionally, GTPase that plays an essential role in the late steps of ribosome biogenesis. The protein is GTPase Der of Salinispora tropica (strain ATCC BAA-916 / DSM 44818 / JCM 13857 / NBRC 105044 / CNB-440).